The primary structure comprises 233 residues: Aspartate/glutamate leucyltransferase (233 aa).

This sequence belongs to the R-transferase family. Bpt subfamily.

Its subcellular location is the cytoplasm. The catalysed reaction is N-terminal L-glutamyl-[protein] + L-leucyl-tRNA(Leu) = N-terminal L-leucyl-L-glutamyl-[protein] + tRNA(Leu) + H(+). It carries out the reaction N-terminal L-aspartyl-[protein] + L-leucyl-tRNA(Leu) = N-terminal L-leucyl-L-aspartyl-[protein] + tRNA(Leu) + H(+). Its function is as follows. Functions in the N-end rule pathway of protein degradation where it conjugates Leu from its aminoacyl-tRNA to the N-termini of proteins containing an N-terminal aspartate or glutamate. This Vibrio campbellii (strain ATCC BAA-1116) protein is Aspartate/glutamate leucyltransferase.